The primary structure comprises 585 residues: Ras-specific guanine nucleotide-releasing factor RalGPS1 (585 aa).

A Ras-GEF domain is found at 50-289 (TPEEFASQIT…YKLSLRIEPG (240 aa)). Disordered stretches follow at residues 289–342 (GSSS…KSHS) and 378–410 (RSPR…SEEM). A compositionally biased stretch (low complexity) spans 303 to 312 (AGPSAGSSSA). Residues 330–333 (PTPP) carry the PXXP motif. The span at 385–396 (THTSSTAITNGL) shows a compositional bias: polar residues. The PH domain occupies 459–571 (VPTMEGPLRR…WHKHLDDACK (113 aa)). Residues 461 to 585 (TMEGPLRRKT…QVPANLMSFE (125 aa)) form a required for stimulation of nucleotide exchange by RALA region.

As to quaternary structure, interacts with the SH3 domains of GRB2, NCK1, PLCG1 and SRC.

It localises to the cytoplasm. It is found in the cell membrane. Its function is as follows. Guanine nucleotide exchange factor for the small GTPase RALA. May be involved in cytoskeleton organization. In Mus musculus (Mouse), this protein is Ras-specific guanine nucleotide-releasing factor RalGPS1 (Ralgps1).